The chain runs to 152 residues: Siroheme decarboxylase beta subunit (152 aa).

This sequence belongs to the Ahb/Nir family. In terms of assembly, forms a heterodimer composed of AhbA and AhbB.

The enzyme catalyses siroheme + 2 H(+) = 12,18-didecarboxysiroheme + 2 CO2. Its pathway is porphyrin-containing compound metabolism; protoheme biosynthesis. Binds heme b. The redox state of the heme b modulates the activity of the enzyme. Activity is stimulated by sodium dithionite. In terms of biological role, involved in siroheme-dependent heme b biosynthesis. Catalyzes the decarboxylation of siroheme into didecarboxysiroheme. The sequence is that of Siroheme decarboxylase beta subunit from Methanosarcina barkeri (strain Fusaro / DSM 804).